The chain runs to 400 residues: MSERVILAYSGGLDTSVAISWIGKETGREVVAVAIDLGQGGEDMDVVRQRALDCGAVEAVVIDARDEFAEDYCLPAIQSNALYMDRYPLVSALSRPLIVKHLVDAAREHKGGIVAHGCTGKGNDQVRFEVGFASLAPDLEVLAPVRDYAWTREKAIAFAEENAIPINVTKRSPFSIDQNVWGRAVETGFLEHLWNAPTKDVYDYTEDPTLNWSTPDEVIVGFDKGVPVSIDGRDVTVLQAIEELNRRAGAQGVGRLDVVEDRLVGIKSREIYEAPGAMVLITAHTELEHVTLERELGRFKRTTDQKWGELVYDGLWFSPLKTALESFVAKTQEHVSGEIRLVLHGGHIAVNGRRSQESLYDFNLATYDEGDTFDQSSAKGFVHVHGLSSSISARRDLGIK.

8 to 16 serves as a coordination point for ATP; that stretch reads AYSGGLDTS. Position 87 (Tyr87) interacts with L-citrulline. Gly117 is an ATP binding site. L-aspartate-binding residues include Thr119, Asn123, and Asp124. Asn123 contacts L-citrulline. The L-citrulline site is built by Arg127, Ser175, Glu260, and Tyr272.

This sequence belongs to the argininosuccinate synthase family. Type 1 subfamily. As to quaternary structure, homotetramer.

The protein localises to the cytoplasm. The enzyme catalyses L-citrulline + L-aspartate + ATP = 2-(N(omega)-L-arginino)succinate + AMP + diphosphate + H(+). The protein operates within amino-acid biosynthesis; L-arginine biosynthesis; L-arginine from L-ornithine and carbamoyl phosphate: step 2/3. The polypeptide is Argininosuccinate synthase (Mycobacterium sp. (strain KMS)).